We begin with the raw amino-acid sequence, 465 residues long: Ribulose bisphosphate carboxylase large chain (465 aa).

N6,N6,N6-trimethyllysine is present on Lys-4. Substrate contacts are provided by Asn-113 and Thr-163. Lys-165 functions as the Proton acceptor in the catalytic mechanism. Residue Lys-167 participates in substrate binding. The Mg(2+) site is built by Lys-191, Asp-193, and Glu-194. Lys-191 is modified (N6-carboxylysine). Residue His-284 is the Proton acceptor of the active site. Residues Arg-285, His-317, and Ser-369 each coordinate substrate.

It belongs to the RuBisCO large chain family. Type I subfamily. As to quaternary structure, heterohexadecamer of 8 large chains and 8 small chains; disulfide-linked. The disulfide link is formed within the large subunit homodimers. It depends on Mg(2+) as a cofactor. In terms of processing, the disulfide bond which can form in the large chain dimeric partners within the hexadecamer appears to be associated with oxidative stress and protein turnover.

It is found in the plastid. Its subcellular location is the chloroplast. It catalyses the reaction 2 (2R)-3-phosphoglycerate + 2 H(+) = D-ribulose 1,5-bisphosphate + CO2 + H2O. The catalysed reaction is D-ribulose 1,5-bisphosphate + O2 = 2-phosphoglycolate + (2R)-3-phosphoglycerate + 2 H(+). In terms of biological role, ruBisCO catalyzes two reactions: the carboxylation of D-ribulose 1,5-bisphosphate, the primary event in carbon dioxide fixation, as well as the oxidative fragmentation of the pentose substrate in the photorespiration process. Both reactions occur simultaneously and in competition at the same active site. This Acer saccharum (Sugar maple) protein is Ribulose bisphosphate carboxylase large chain.